A 306-amino-acid chain; its full sequence is MEQFLLSVGLLVCLVCLVKCVRFSRYLFLSFCKALPGSFLRSMGQWAVITGAGDGIGKAYSFELARHGLNVVLISRTLEKLQVISEEIERTTGSRVKVVQADFTREDIYDHIEEQLKGLEIGVLVNNVGMLPNLLPSHFLSTSGESQSVIHCNITSVVKMTQLVLKHMESRRRGLILNISSGVGVRPWPLYSLYSASKAFVCTFSKALNVEYRDKGIIIQVLTPYSVSTPMTKYLNTSRVTKTADEFVKESLKYVTIGAETCGCLAHEILAIILNLIPSRIFYSSTTQRFLLKQFSDYLKSNISNR.

An NADP(+)-binding site is contributed by 44–73; sequence GQWAVITGAGDGIGKAYSFELARHGLNVVL. Residue serine 181 participates in substrate binding. Tyrosine 194 functions as the Proton acceptor in the catalytic mechanism.

Belongs to the short-chain dehydrogenases/reductases (SDR) family. 17-beta-HSD 3 subfamily.

Its subcellular location is the endoplasmic reticulum. The catalysed reaction is a 17beta-hydroxy steroid + NADP(+) = a 17-oxo steroid + NADPH + H(+). It catalyses the reaction testosterone + NADP(+) = androst-4-ene-3,17-dione + NADPH + H(+). The enzyme catalyses 17beta-estradiol + NADP(+) = estrone + NADPH + H(+). It carries out the reaction 3beta-hydroxyandrost-5-en-17-one + NADPH + H(+) = androst-5-en-3beta,17beta-diol + NADP(+). The catalysed reaction is 17beta-hydroxy-5alpha-androstan-3-one + NADP(+) = 5alpha-androstan-3,17-dione + NADPH + H(+). It catalyses the reaction androsterone + NADPH + H(+) = 5alpha-androstane-3alpha,17beta-diol + NADP(+). The enzyme catalyses 3beta-hydroxy-5alpha-androstan-17-one + NADPH + H(+) = 5alpha-androstane-3beta,17beta-diol + NADP(+). It carries out the reaction androst-4-ene-3,11,17-trione + NADPH + H(+) = 17beta-hydroxyandrost-4-ene-3,11-dione + NADP(+). The catalysed reaction is 11beta-hydroxyandrost-4-ene-3,17-dione + NADPH + H(+) = 11beta,17beta-dihydroxyandrost-4-ene-3-one + NADP(+). It functions in the pathway hormone biosynthesis; testosterone biosynthesis. The protein operates within steroid metabolism. In terms of biological role, catalyzes the conversion of 17-oxosteroids to 17beta-hydroxysteroids. Favors the reduction of androstenedione to testosterone. Testosterone is the key androgen driving male development and function. Uses NADPH while the two other EDH17B enzymes use NADH. Androgens such as epiandrosterone, dehydroepiandrosterone, androsterone and androstanedione are accepted as substrates and reduced at C-17. Can reduce 11-ketoandrostenedione as well as 11beta-hydroxyandrostenedione at C-17 to the respective testosterone forms. Plays a role in the rate-limiting-step for the maximum level of testosterone production by the testis but does not affect basal testosterone production. This Rattus norvegicus (Rat) protein is 17-beta-hydroxysteroid dehydrogenase type 3.